A 358-amino-acid polypeptide reads, in one-letter code: Uroporphyrinogen decarboxylase (358 aa).

Substrate contacts are provided by residues 36–40 (RQAGR), Asp85, Tyr160, Ser215, and His338.

It belongs to the uroporphyrinogen decarboxylase family. In terms of assembly, homodimer.

Its subcellular location is the cytoplasm. The catalysed reaction is uroporphyrinogen III + 4 H(+) = coproporphyrinogen III + 4 CO2. Its pathway is porphyrin-containing compound metabolism; protoporphyrin-IX biosynthesis; coproporphyrinogen-III from 5-aminolevulinate: step 4/4. Its function is as follows. Catalyzes the decarboxylation of four acetate groups of uroporphyrinogen-III to yield coproporphyrinogen-III. This Corynebacterium glutamicum (strain ATCC 13032 / DSM 20300 / JCM 1318 / BCRC 11384 / CCUG 27702 / LMG 3730 / NBRC 12168 / NCIMB 10025 / NRRL B-2784 / 534) protein is Uroporphyrinogen decarboxylase.